The following is a 1401-amino-acid chain: DNA-directed RNA polymerase subunit beta'' (1401 aa).

Zn(2+) contacts are provided by C224, C295, C302, and C305.

Belongs to the RNA polymerase beta' chain family. RpoC2 subfamily. In plastids the minimal PEP RNA polymerase catalytic core is composed of four subunits: alpha, beta, beta', and beta''. When a (nuclear-encoded) sigma factor is associated with the core the holoenzyme is formed, which can initiate transcription. Zn(2+) serves as cofactor.

Its subcellular location is the plastid. It localises to the chloroplast. It carries out the reaction RNA(n) + a ribonucleoside 5'-triphosphate = RNA(n+1) + diphosphate. In terms of biological role, DNA-dependent RNA polymerase catalyzes the transcription of DNA into RNA using the four ribonucleoside triphosphates as substrates. The protein is DNA-directed RNA polymerase subunit beta'' of Ipomoea purpurea (Common morning glory).